We begin with the raw amino-acid sequence, 474 residues long: 2-succinylbenzoate--CoA ligase (474 aa).

The protein belongs to the ATP-dependent AMP-binding enzyme family. MenE subfamily.

The enzyme catalyses 2-succinylbenzoate + ATP + CoA = 2-succinylbenzoyl-CoA + AMP + diphosphate. It functions in the pathway quinol/quinone metabolism; 1,4-dihydroxy-2-naphthoate biosynthesis; 1,4-dihydroxy-2-naphthoate from chorismate: step 5/7. It participates in quinol/quinone metabolism; menaquinone biosynthesis. Its function is as follows. Converts 2-succinylbenzoate (OSB) to 2-succinylbenzoyl-CoA (OSB-CoA). In Staphylococcus epidermidis (strain ATCC 12228 / FDA PCI 1200), this protein is 2-succinylbenzoate--CoA ligase.